A 185-amino-acid chain; its full sequence is Ribosome-recycling factor (185 aa).

Belongs to the RRF family.

The protein localises to the cytoplasm. Its function is as follows. Responsible for the release of ribosomes from messenger RNA at the termination of protein biosynthesis. May increase the efficiency of translation by recycling ribosomes from one round of translation to another. This is Ribosome-recycling factor from Geobacillus thermodenitrificans (strain NG80-2).